Consider the following 205-residue polypeptide: uncharacterized protein (205 aa).

5 helical membrane-spanning segments follow: residues 5–25 (VWLAYLLTAVVFSLAPGSGTV), 41–61 (GAIIGLQIGLACHIVLVGIGI), 68–88 (SALAFTLIKWIGAAYLVWLGI), 117–137 (LINLTNPKSIVFLVALFPQFI), and 147–167 (FLVLGITTVTIDAIVMFGYTA).

This sequence belongs to the Rht family.

It is found in the cell inner membrane. Its function is as follows. Involved in positive regulation of motility and negative regulation of biofilm formation. This is an uncharacterized protein from Vibrio cholerae serotype O1 (strain ATCC 39315 / El Tor Inaba N16961).